Consider the following 181-residue polypeptide: Acetylcholinesterase (181 aa).

Serine 76 functions as the Acyl-ester intermediate in the catalytic mechanism. The active-site Charge relay system is glutamate 132. The tract at residues 162–181 is disordered; it reads WQDQDNGGLPLTGNPTXPHN.

It belongs to the type-B carboxylesterase/lipase family. In terms of processing, the N-terminus is blocked. In terms of tissue distribution, expressed by the venom gland. Is also probably expressed by liver and muscle.

The protein localises to the synapse. Its subcellular location is the secreted. It localises to the cell membrane. The enzyme catalyses acetylcholine + H2O = choline + acetate + H(+). In terms of biological role, in venom, its toxic role is unclear: it could result in less musculatory control by rapidly hydrolyzing acetylcholine, or that it works synergistically with alkaline phosphatase (ALP) in paralyzing prey through hypotension. In muscle, it terminates signal transduction at the neuromuscular junction by rapid hydrolysis of the acetylcholine released into the synaptic cleft. In liver, its function is unclear: it could serve as a safeguard against any diffusion of acetylcholine from synapses into the circulation. This chain is Acetylcholinesterase (ACHE), found in Naja oxiana (Central Asian cobra).